The sequence spans 199 residues: GTP-binding protein Di-Ras2 (199 aa).

GTP is bound by residues 14–21 (GAGGVGKS), 33–39 (RESYIPT), 61–65 (DTTGS), and 121–124 (NKCD). Ser-35 is subject to Phosphoserine. An Effector region motif is present at residues 36–44 (YIPTVEDTY). Residue Ser-126 is modified to Phosphoserine. Residue 152–153 (AK) coordinates GTP. A Cysteine methyl ester modification is found at Cys-196. Cys-196 is lipidated: S-geranylgeranyl cysteine. Residues 197 to 199 (VIM) constitute a propeptide, removed in mature form.

The protein belongs to the small GTPase superfamily. Di-Ras family. In terms of processing, ubiquitinated by the ECS(ASB11) complex via 'Lys-11'-linked ubiquitin chains, leading to its degradation by the proteasome.

The protein localises to the cell membrane. It carries out the reaction GTP + H2O = GDP + phosphate + H(+). Functionally, displays low GTPase activity and exists predominantly in the GTP-bound form. This Macaca fascicularis (Crab-eating macaque) protein is GTP-binding protein Di-Ras2 (DIRAS2).